We begin with the raw amino-acid sequence, 352 residues long: Ribosome biogenesis protein BRX1 homolog (352 aa).

The disordered stretch occupies residues M1–P47. Basic and acidic residues predominate over residues D34–I46. The Brix domain maps to E59 to G248. Residue K159 forms a Glycyl lysine isopeptide (Lys-Gly) (interchain with G-Cter in SUMO2) linkage. Phosphoserine is present on S260. An N6-acetyllysine modification is found at K275. Positions Q281–P301 are disordered. Glycyl lysine isopeptide (Lys-Gly) (interchain with G-Cter in SUMO2) cross-links involve residues K313 and K321.

It belongs to the BRX1 family.

It is found in the nucleus. The protein resides in the nucleolus. Required for biogenesis of the 60S ribosomal subunit. This Rattus norvegicus (Rat) protein is Ribosome biogenesis protein BRX1 homolog (Brix1).